A 346-amino-acid chain; its full sequence is 3-dehydroquinate synthase (346 aa).

NAD(+) contacts are provided by residues 62–67 (DGEQYK), 96–100 (GVISD), 120–121 (TT), K133, and K142. 3 residues coordinate Zn(2+): E175, H234, and H251.

It belongs to the sugar phosphate cyclases superfamily. Dehydroquinate synthase family. Co(2+) serves as cofactor. Zn(2+) is required as a cofactor. It depends on NAD(+) as a cofactor.

It localises to the cytoplasm. The enzyme catalyses 7-phospho-2-dehydro-3-deoxy-D-arabino-heptonate = 3-dehydroquinate + phosphate. It functions in the pathway metabolic intermediate biosynthesis; chorismate biosynthesis; chorismate from D-erythrose 4-phosphate and phosphoenolpyruvate: step 2/7. Its function is as follows. Catalyzes the conversion of 3-deoxy-D-arabino-heptulosonate 7-phosphate (DAHP) to dehydroquinate (DHQ). This Campylobacter fetus subsp. fetus (strain 82-40) protein is 3-dehydroquinate synthase.